Reading from the N-terminus, the 95-residue chain is Co-chaperonin GroES (95 aa).

This sequence belongs to the GroES chaperonin family. As to quaternary structure, heptamer of 7 subunits arranged in a ring. Interacts with the chaperonin GroEL.

It localises to the cytoplasm. In terms of biological role, together with the chaperonin GroEL, plays an essential role in assisting protein folding. The GroEL-GroES system forms a nano-cage that allows encapsulation of the non-native substrate proteins and provides a physical environment optimized to promote and accelerate protein folding. GroES binds to the apical surface of the GroEL ring, thereby capping the opening of the GroEL channel. In Chlorobium phaeovibrioides (strain DSM 265 / 1930) (Prosthecochloris vibrioformis (strain DSM 265)), this protein is Co-chaperonin GroES.